A 284-amino-acid polypeptide reads, in one-letter code: 2-dehydro-3-deoxyphosphooctonate aldolase (284 aa).

The protein belongs to the KdsA family.

It is found in the cytoplasm. It carries out the reaction D-arabinose 5-phosphate + phosphoenolpyruvate + H2O = 3-deoxy-alpha-D-manno-2-octulosonate-8-phosphate + phosphate. It participates in carbohydrate biosynthesis; 3-deoxy-D-manno-octulosonate biosynthesis; 3-deoxy-D-manno-octulosonate from D-ribulose 5-phosphate: step 2/3. Its pathway is bacterial outer membrane biogenesis; lipopolysaccharide biosynthesis. The sequence is that of 2-dehydro-3-deoxyphosphooctonate aldolase from Bordetella petrii (strain ATCC BAA-461 / DSM 12804 / CCUG 43448).